A 422-amino-acid polypeptide reads, in one-letter code: Serine hydroxymethyltransferase (422 aa).

121-123 is a (6S)-5,6,7,8-tetrahydrofolate binding site; sequence GHI. Lys227 carries the post-translational modification N6-(pyridoxal phosphate)lysine. Residue Glu245 coordinates (6S)-5,6,7,8-tetrahydrofolate.

The protein belongs to the SHMT family. As to quaternary structure, homodimer. Pyridoxal 5'-phosphate serves as cofactor.

It localises to the cytoplasm. The enzyme catalyses 5,10-methylenetetrahydromethanopterin + glycine + H2O = 5,6,7,8-tetrahydromethanopterin + L-serine. It participates in amino-acid biosynthesis; glycine biosynthesis; glycine from L-serine: step 1/1. Its function is as follows. Catalyzes the reversible interconversion of serine and glycine with tetrahydromethanopterin (H4MPT) serving as the one-carbon carrier. Also exhibits a pteridine-independent aldolase activity toward beta-hydroxyamino acids, producing glycine and aldehydes, via a retro-aldol mechanism. The polypeptide is Serine hydroxymethyltransferase (Methanobrevibacter smithii (strain ATCC 35061 / DSM 861 / OCM 144 / PS)).